A 357-amino-acid polypeptide reads, in one-letter code: Elongation factor Ts (357 aa).

An involved in Mg(2+) ion dislocation from EF-Tu region spans residues 82–85 (TDFV).

It belongs to the EF-Ts family.

It localises to the cytoplasm. Its function is as follows. Associates with the EF-Tu.GDP complex and induces the exchange of GDP to GTP. It remains bound to the aminoacyl-tRNA.EF-Tu.GTP complex up to the GTP hydrolysis stage on the ribosome. In Campylobacter jejuni subsp. jejuni serotype O:6 (strain 81116 / NCTC 11828), this protein is Elongation factor Ts.